The sequence spans 298 residues: MSNAREIRSKVQSVKNTQKITGAMELVAASKMRGAIVKMNNVRPYVESANTIIKNVTAASIDYPNPYLFDRDVKRVGYIVISTDRGLCGGLNINLFKHVLKEIKNNIEDRVGVDVCVIGSKAENFFAKLKDVNIVATAHYNDKDKEGSIRAIGGAVKVMLDKFTAGEIDRLYMSSNQFVSTIKQRPRLQTLLPIQDIFSAEEIKANKEKATKGHWDYIYERDIEEVLNALFIRYIEAQVRGAILENAACEQAARMMAMKNATDNASDIIDQLKLDYNKVRQAMITQELAEICSGAAAV.

Belongs to the ATPase gamma chain family. As to quaternary structure, F-type ATPases have 2 components, CF(1) - the catalytic core - and CF(0) - the membrane proton channel. CF(1) has five subunits: alpha(3), beta(3), gamma(1), delta(1), epsilon(1). CF(0) has three main subunits: a, b and c.

It is found in the cell inner membrane. Functionally, produces ATP from ADP in the presence of a proton gradient across the membrane. The gamma chain is believed to be important in regulating ATPase activity and the flow of protons through the CF(0) complex. This Francisella tularensis subsp. tularensis (strain FSC 198) protein is ATP synthase gamma chain.